Consider the following 149-residue polypeptide: UPF0179 protein MM_0589 (149 aa).

It belongs to the UPF0179 family.

The chain is UPF0179 protein MM_0589 from Methanosarcina mazei (strain ATCC BAA-159 / DSM 3647 / Goe1 / Go1 / JCM 11833 / OCM 88) (Methanosarcina frisia).